Here is a 296-residue protein sequence, read N- to C-terminus: Urease operon transcriptional activator (296 aa).

One can recognise an HTH araC/xylS-type domain in the interval 171–268; it reads QAITHLITQE…NMTPSQFRLQ (98 aa). 2 DNA-binding regions (H-T-H motif) span residues 188-209 and 235-258; these read DDVA…NREG and VFQI…KRKY.

Functionally, positive regulator of the expression of the urease operon. This chain is Urease operon transcriptional activator (ureR), found in Escherichia coli.